A 501-amino-acid polypeptide reads, in one-letter code: DDB1- and CUL4-associated factor 12-like protein 1 (501 aa).

Over residues 1-37 the composition is skewed to polar residues; the sequence is MRQADSQTQPSPAEQETPQPAGPSNRSPPTMGPQQTG. Residues 1-67 form a disordered region; the sequence is MRQADSQTQP…PAAPMATAGE (67 aa). WD repeat units lie at residues 185 to 225, 230 to 268, 298 to 337, and 384 to 423; these read PPSC…PVCL, GHRDWIFAIAWMSDTVAVSGSRDGTVALWKVDPDMFNGS, PGNRKVRALAFSNKNQELGAVSLDGYFHLWKARSSLSRLL, and SREGGTGVRSLSVHQHIVTVGTGHGSLLFYDIRAQKFLEE.

It belongs to the WD repeat DCAF12 family.

The chain is DDB1- and CUL4-associated factor 12-like protein 1 (Dcaf12l1) from Mus musculus (Mouse).